The chain runs to 331 residues: Glycerol-3-phosphate dehydrogenase [NAD(P)+] (331 aa).

The NADPH site is built by tryptophan 13, arginine 33, and lysine 103. Sn-glycerol 3-phosphate-binding residues include lysine 103, glycine 131, and threonine 133. Alanine 135 contributes to the NADPH binding site. Sn-glycerol 3-phosphate-binding residues include lysine 187, aspartate 240, serine 250, arginine 251, and asparagine 252. Lysine 187 serves as the catalytic Proton acceptor. Residue arginine 251 coordinates NADPH. 2 residues coordinate NADPH: valine 275 and glutamate 277.

The protein belongs to the NAD-dependent glycerol-3-phosphate dehydrogenase family.

It is found in the cytoplasm. The enzyme catalyses sn-glycerol 3-phosphate + NAD(+) = dihydroxyacetone phosphate + NADH + H(+). It carries out the reaction sn-glycerol 3-phosphate + NADP(+) = dihydroxyacetone phosphate + NADPH + H(+). It functions in the pathway membrane lipid metabolism; glycerophospholipid metabolism. Functionally, catalyzes the reduction of the glycolytic intermediate dihydroxyacetone phosphate (DHAP) to sn-glycerol 3-phosphate (G3P), the key precursor for phospholipid synthesis. In Novosphingobium aromaticivorans (strain ATCC 700278 / DSM 12444 / CCUG 56034 / CIP 105152 / NBRC 16084 / F199), this protein is Glycerol-3-phosphate dehydrogenase [NAD(P)+].